A 766-amino-acid chain; its full sequence is TBC1 domain family member 30 (766 aa).

The region spanning 87 to 295 (GIPKEWRRKV…KIWDSVFFEG (209 aa)) is the Rab-GAP TBC domain. Positions 380 to 406 (PTSVSGRHSKARDSDDENGPDDEDAVA) are disordered. Acidic residues predominate over residues 393–404 (SDDENGPDDEDA). Residues 422–491 (ELQKYQKQIK…YSRIKKKQQQ (70 aa)) are a coiled coil. Disordered regions lie at residues 603–647 (SSLG…EPVF) and 731–766 (NLGL…TKKR). Ser642 is modified (phosphoserine). Over residues 751–766 (RGFNKSGIGNSSTKKR) the composition is skewed to polar residues.

It is found in the cell membrane. Functionally, may act as a GTPase-activating protein for Rab family protein(s). This Mus musculus (Mouse) protein is TBC1 domain family member 30 (Tbc1d30).